A 288-amino-acid chain; its full sequence is 2-hydroxy-6-oxononadienedioate/2-hydroxy-6-oxononatrienedioate hydrolase (288 aa).

Residues 38 to 273 (VVLLHGSGPG…DCGHWAQWEH (236 aa)) enclose the AB hydrolase-1 domain. His-267 (proton acceptor) is an active-site residue.

Belongs to the AB hydrolase superfamily. MhpC family. Homodimer.

The enzyme catalyses (2Z,4E)-2-hydroxy-6-oxonona-2,4-dienedioate + H2O = (2Z)-2-hydroxypenta-2,4-dienoate + succinate + H(+). It carries out the reaction (2Z,4E,7E)-2-hydroxy-6-oxonona-2,4,7-trienedioate + H2O = (2Z)-2-hydroxypenta-2,4-dienoate + fumarate + H(+). It functions in the pathway aromatic compound metabolism; 3-phenylpropanoate degradation. Its function is as follows. Catalyzes the cleavage of the C5-C6 bond of 2-hydroxy-6-oxononadienedioate and 2-hydroxy-6-oxononatrienedioate, a dienol ring fission product of the bacterial meta-cleavage pathway for degradation of phenylpropionic acid. The sequence is that of 2-hydroxy-6-oxononadienedioate/2-hydroxy-6-oxononatrienedioate hydrolase from Escherichia coli O139:H28 (strain E24377A / ETEC).